Reading from the N-terminus, the 254-residue chain is 5-oxoprolinase subunit A (254 aa).

Belongs to the LamB/PxpA family. As to quaternary structure, forms a complex composed of PxpA, PxpB and PxpC.

The catalysed reaction is 5-oxo-L-proline + ATP + 2 H2O = L-glutamate + ADP + phosphate + H(+). In terms of biological role, catalyzes the cleavage of 5-oxoproline to form L-glutamate coupled to the hydrolysis of ATP to ADP and inorganic phosphate. This is 5-oxoprolinase subunit A from Carboxydothermus hydrogenoformans (strain ATCC BAA-161 / DSM 6008 / Z-2901).